A 495-amino-acid polypeptide reads, in one-letter code: MSEVLQRLASTEVRKARDPIDRFLERRQLFRKHMLGDASSLFRVVAEQVYDTQMLHYEVRMECVRYMFTKWKTFRRFVSGDFDEYLWHLGKTKTAGTILELGAMCHLYRRNVIIYEPFDMGRMVTYNKDYKEILRIFMNSMGHFETVLTMQDVDMAAVCQSVSFKMLYKHLFRLPDVDLAVEWMLYPDTFKMGTEYEFDSRGRAIRLLCRNGRSFKLDRPESTICLLENSQMCPFHNRRLAMGGQFADFSCMRILLEENNIPFSYLVAKSMDPCRYRNVELTSAIEARREAYEFGIYIGDYNFKVGAKCQVQLDTNRRDLLSACYIQSIDKKKSVCKVFIEEQGKLVDVPSDNLHPLPPDEFKAWDFARKRPQRLHNSQMGRQSVQGDQQGFVPDPMPGTAPSMPPPPVADPRPVNVTAQQPPVFGPSRWMEPTRPLMPNPLMIHQTGSFVFVQQPRVGPPSVMMHVLIIVHNAPYMLAFDHAPHPPAPQCTAPF.

The OTU domain maps to 29-150; that stretch reads LFRKHMLGDA…MGHFETVLTM (122 aa). Residues 302–364 form the Tudor domain; the sequence is NFKVGAKCQV…HPLPPDEFKA (63 aa). Residues 375–389 show a composition bias toward polar residues; sequence LHNSQMGRQSVQGDQ. A disordered region spans residues 375 to 404; it reads LHNSQMGRQSVQGDQQGFVPDPMPGTAPSM. Residues 395–404 are compositionally biased toward pro residues; sequence DPMPGTAPSM.

Putative OTU-type deubiquitinase. Catalytically inactive towards all diubiquitin molecules and long K48- and K63- linked ubiquitin chains in vitro. Potential modulator of apoptosis. The chain is OTU domain-containing protein CG3251 from Drosophila melanogaster (Fruit fly).